Here is a 142-residue protein sequence, read N- to C-terminus: Small ribosomal subunit protein uS12 (142 aa).

The segment at 1-43 (MPTFNQLVRKGRKVIEKKSNSPALQKGFNSKKKKPTDVNSPQK) is disordered. Asp102 carries the post-translational modification 3-methylthioaspartic acid.

Belongs to the universal ribosomal protein uS12 family. In terms of assembly, part of the 30S ribosomal subunit. Contacts proteins S8 and S17. May interact with IF1 in the 30S initiation complex.

Its function is as follows. With S4 and S5 plays an important role in translational accuracy. In terms of biological role, interacts with and stabilizes bases of the 16S rRNA that are involved in tRNA selection in the A site and with the mRNA backbone. Located at the interface of the 30S and 50S subunits, it traverses the body of the 30S subunit contacting proteins on the other side and probably holding the rRNA structure together. The combined cluster of proteins S8, S12 and S17 appears to hold together the shoulder and platform of the 30S subunit. The sequence is that of Small ribosomal subunit protein uS12 from Ruminiclostridium cellulolyticum (strain ATCC 35319 / DSM 5812 / JCM 6584 / H10) (Clostridium cellulolyticum).